A 122-amino-acid polypeptide reads, in one-letter code: Basic phospholipase A2 CbII (122 aa).

Cystine bridges form between cysteine 26–cysteine 115, cysteine 28–cysteine 44, cysteine 43–cysteine 95, cysteine 49–cysteine 122, cysteine 50–cysteine 88, cysteine 57–cysteine 81, and cysteine 75–cysteine 86. Positions 27, 29, and 31 each coordinate Ca(2+). Residue histidine 47 is part of the active site. Residue aspartate 48 participates in Ca(2+) binding. Aspartate 89 is an active-site residue.

The protein belongs to the phospholipase A2 family. Group I subfamily. D49 sub-subfamily. Heterodimer of an acidic subunit (CbIalpha or CbIbeta) and a basic subunit (CbII). The acidic subunit is non-toxic, and increases the toxicity of the basic subunit. The cofactor is Ca(2+). In terms of tissue distribution, expressed by the venom gland.

It is found in the secreted. It catalyses the reaction a 1,2-diacyl-sn-glycero-3-phosphocholine + H2O = a 1-acyl-sn-glycero-3-phosphocholine + a fatty acid + H(+). Heterodimer: presynaptic neurotoxin. Its function is as follows. Monomer: Snake venom phospholipase A2 (PLA2) that exhibits strong anticoagulant effects by binding to factor Xa (F10) and inhibiting the prothrombinase activity (IC(50) is 20 nM). PLA2 catalyzes the calcium-dependent hydrolysis of the 2-acyl groups in 3-sn-phosphoglycerides. This Pseudocerastes fieldi (Field's horned viper) protein is Basic phospholipase A2 CbII.